The primary structure comprises 476 residues: Argininosuccinate lyase (476 aa).

Low complexity predominate over residues 1–17; the sequence is MTDTGSSDTNTDTTGTS. A disordered region spans residues 1–22; sequence MTDTGSSDTNTDTTGTSKANTM.

Belongs to the lyase 1 family. Argininosuccinate lyase subfamily.

It is found in the cytoplasm. The catalysed reaction is 2-(N(omega)-L-arginino)succinate = fumarate + L-arginine. It functions in the pathway amino-acid biosynthesis; L-arginine biosynthesis; L-arginine from L-ornithine and carbamoyl phosphate: step 3/3. The chain is Argininosuccinate lyase from Jannaschia sp. (strain CCS1).